We begin with the raw amino-acid sequence, 308 residues long: Protoheme IX farnesyltransferase (308 aa).

The next 8 helical transmembrane spans lie at 20-40 (LLAYLALTKPRVIELLLVTAI), 50-70 (AIHPLLMLNTLVGGMMAATGA), 102-122 (NALALGLTLTVISFFWLWCAT), 124-144 (LLAGVLALVTVAFYVFVYTLW), 149-169 (TSQNVVWGGAAGCMPVMIGWS), 170-190 (AITGTIAWPALAMFAIIFFWT), 227-249 (LIYTWLTVAATLVLALATSWLYG), and 288-308 (YLAVVFCALAVDSVIALPTLH).

The protein belongs to the UbiA prenyltransferase family. Protoheme IX farnesyltransferase subfamily.

It localises to the cell membrane. It catalyses the reaction heme b + (2E,6E)-farnesyl diphosphate + H2O = Fe(II)-heme o + diphosphate. The protein operates within porphyrin-containing compound metabolism; heme O biosynthesis; heme O from protoheme: step 1/1. Converts heme B (protoheme IX) to heme O by substitution of the vinyl group on carbon 2 of heme B porphyrin ring with a hydroxyethyl farnesyl side group. The polypeptide is Protoheme IX farnesyltransferase (Mycobacterium bovis (strain BCG / Pasteur 1173P2)).